Reading from the N-terminus, the 390-residue chain is 8-amino-7-oxononanoate synthase (390 aa).

A substrate-binding site is contributed by R19. Pyridoxal 5'-phosphate is bound at residue G106–Y107. Position 131 (H131) interacts with substrate. S176, H204, and T233 together coordinate pyridoxal 5'-phosphate. Position 236 is an N6-(pyridoxal phosphate)lysine (K236). Residue T350 participates in substrate binding.

It belongs to the class-II pyridoxal-phosphate-dependent aminotransferase family. BioF subfamily. Homodimer. Pyridoxal 5'-phosphate serves as cofactor.

It catalyses the reaction 6-carboxyhexanoyl-[ACP] + L-alanine + H(+) = (8S)-8-amino-7-oxononanoate + holo-[ACP] + CO2. Its pathway is cofactor biosynthesis; biotin biosynthesis. Its function is as follows. Catalyzes the decarboxylative condensation of pimeloyl-[acyl-carrier protein] and L-alanine to produce 8-amino-7-oxononanoate (AON), [acyl-carrier protein], and carbon dioxide. This is 8-amino-7-oxononanoate synthase from Pseudomonas entomophila (strain L48).